Reading from the N-terminus, the 352-residue chain is tRNA pseudouridine synthase D (352 aa).

The active-site Nucleophile is aspartate 81. The TRUD domain occupies 157–303 (GIPNYFGAQR…MSHERRILRL (147 aa)).

It belongs to the pseudouridine synthase TruD family.

The enzyme catalyses uridine(13) in tRNA = pseudouridine(13) in tRNA. Responsible for synthesis of pseudouridine from uracil-13 in transfer RNAs. This is tRNA pseudouridine synthase D from Pseudomonas fluorescens (strain Pf0-1).